The following is a 1444-amino-acid chain: Probable serine/threonine-protein kinase irlC (1444 aa).

A disordered region spans residues 335-370 (TLINNNNNNNNNNNNNNNNNNNNNNNNNNNNNNNSK). The span at 338-368 (NNNNNNNNNNNNNNNNNNNNNNNNNNNNNNN) shows a compositional bias: low complexity. Residues 495–529 (FTFYLSFGEIFTCSCEDYKREFSCKHMFFILLNYY) form an SWIM-type zinc finger. Residues 584–613 (TSPFQSINNNNNNNLNNNNNNNLNNNNNNE) show a composition bias toward low complexity. Disordered regions lie at residues 584-619 (TSPFQSINNNNNNNLNNNNNNNLNNNNNNENENKFK) and 864-938 (QKEK…ITPI). Coiled coils occupy residues 593–620 (NNNNNLNNNNNNNLNNNNNNENENKFKE) and 847–879 (IKAEQYLLEQELLEKKKQKEKKKQKQKQSKSKI). Basic residues predominate over residues 864-876 (QKEKKKQKQKQSK). Residues 885-937 (SSSSSSSSSPSTSNTTITSTTPTTTTTTTTTTTPTTTTTTTTTSSPKQKPITP) show a composition bias toward low complexity. A Protein kinase domain is found at 981-1246 (RKEENVLGRG…IEKILLHPFF (266 aa)). ATP-binding positions include 987-995 (LGRGSNGTL) and Lys-1010. The Proton acceptor role is filled by Asp-1116. Residues 1279-1444 (NYQEINLKNN…LIYFNDLIIK (166 aa)) enclose the KEN domain.

Belongs to the protein kinase superfamily. Ser/Thr protein kinase family.

The enzyme catalyses L-seryl-[protein] + ATP = O-phospho-L-seryl-[protein] + ADP + H(+). The catalysed reaction is L-threonyl-[protein] + ATP = O-phospho-L-threonyl-[protein] + ADP + H(+). This chain is Probable serine/threonine-protein kinase irlC (irlC), found in Dictyostelium discoideum (Social amoeba).